Consider the following 380-residue polypeptide: Deoxyguanosinetriphosphate triphosphohydrolase-like protein (380 aa).

Positions 79 to 196 constitute an HD domain; sequence RLTHTLEVQQ…VDAADALAYT (118 aa).

It belongs to the dGTPase family. Type 2 subfamily.

The polypeptide is Deoxyguanosinetriphosphate triphosphohydrolase-like protein (Deinococcus deserti (strain DSM 17065 / CIP 109153 / LMG 22923 / VCD115)).